The primary structure comprises 164 residues: uncharacterized protein (164 aa).

The next 2 membrane-spanning stretches (helical) occupy residues 11–31 (FYVN…PSLL) and 51–71 (CQQY…LVLV).

It localises to the membrane. This is an uncharacterized protein from Saccharomyces cerevisiae (strain ATCC 204508 / S288c) (Baker's yeast).